A 453-amino-acid chain; its full sequence is Phosphoglucosamine mutase (453 aa).

The active-site Phosphoserine intermediate is the serine 110. Residues serine 110, aspartate 248, aspartate 250, and aspartate 252 each coordinate Mg(2+). Serine 110 is subject to Phosphoserine.

The protein belongs to the phosphohexose mutase family. The cofactor is Mg(2+). Activated by phosphorylation.

It carries out the reaction alpha-D-glucosamine 1-phosphate = D-glucosamine 6-phosphate. In terms of biological role, catalyzes the conversion of glucosamine-6-phosphate to glucosamine-1-phosphate. In Mycolicibacterium smegmatis (strain ATCC 700084 / mc(2)155) (Mycobacterium smegmatis), this protein is Phosphoglucosamine mutase.